The chain runs to 513 residues: Noroxomaritidine synthase (513 aa).

A helical membrane pass occupies residues 14–34; sequence HYPEILIAIACFLIFSLLLSA. Cysteine 458 serves as a coordination point for heme.

The protein belongs to the cytochrome P450 family. It depends on heme as a cofactor.

The protein localises to the membrane. It carries out the reaction 4'-O-methylnorbelladine + reduced [NADPH--hemoprotein reductase] + O2 = (10bS,4aR)-noroxomaritidine + oxidized [NADPH--hemoprotein reductase] + 2 H2O + H(+). The enzyme catalyses 4'-O-methylnorbelladine + reduced [NADPH--hemoprotein reductase] + O2 = (10bR,4aS)-noroxomaritidine + oxidized [NADPH--hemoprotein reductase] + 2 H2O + H(+). It functions in the pathway alkaloid biosynthesis. In terms of biological role, cytochrome P450 that catalyzes an intramolecular para-para' C-C phenol coupling of 4'-O-methylnorbelladine in alkaloids biosynthesis, including haemanthamine- and crinamine-type alkaloids, promising anticancer agents. Catalyzes the formation of (10bR,4aS)-noroxomaritidine and (10bS,4aR)-noroxomaritidine from 4'-O-methylnorbelladine. Also produces N-demethylnarwedine as a minor product. Involved in the biosynthesis of haemanthamine. Can also use 4'-O-methyl-N-methylnorbelladine, (S)- and (R)-coclaurine as substrates, but not 3'-O-methylnorbelladine, 3',4'-O-dimethylnorbelladine, norbelladine, haemanthamine, (10bS,4aR)- or (10bR,4aS)-noroxomaritidine, isovanillin or tyramine. The sequence is that of Noroxomaritidine synthase from Narcissus aff. pseudonarcissus MK-2014 (Daffodil).